We begin with the raw amino-acid sequence, 145 residues long: D-aminoacyl-tRNA deacylase (145 aa).

Positions 137–138 (GP) match the Gly-cisPro motif, important for rejection of L-amino acids motif.

This sequence belongs to the DTD family. In terms of assembly, homodimer.

It is found in the cytoplasm. The catalysed reaction is glycyl-tRNA(Ala) + H2O = tRNA(Ala) + glycine + H(+). The enzyme catalyses a D-aminoacyl-tRNA + H2O = a tRNA + a D-alpha-amino acid + H(+). Its function is as follows. An aminoacyl-tRNA editing enzyme that deacylates mischarged D-aminoacyl-tRNAs. Also deacylates mischarged glycyl-tRNA(Ala), protecting cells against glycine mischarging by AlaRS. Acts via tRNA-based rather than protein-based catalysis; rejects L-amino acids rather than detecting D-amino acids in the active site. By recycling D-aminoacyl-tRNA to D-amino acids and free tRNA molecules, this enzyme counteracts the toxicity associated with the formation of D-aminoacyl-tRNA entities in vivo and helps enforce protein L-homochirality. The sequence is that of D-aminoacyl-tRNA deacylase from Pseudomonas fluorescens (strain SBW25).